The primary structure comprises 488 residues: Argininosuccinate lyase (488 aa).

The protein belongs to the lyase 1 family. Argininosuccinate lyase subfamily.

It is found in the cytoplasm. The catalysed reaction is 2-(N(omega)-L-arginino)succinate = fumarate + L-arginine. It functions in the pathway amino-acid biosynthesis; L-arginine biosynthesis; L-arginine from L-ornithine and carbamoyl phosphate: step 3/3. In Corynebacterium jeikeium (strain K411), this protein is Argininosuccinate lyase.